Consider the following 267-residue polypeptide: CUE domain-containing protein 2 (267 aa).

Residues 90-125 (ARNKETLRRPEKLKEESRPPAATGNTQDEAAAAEEE) form a disordered region. Over residues 91 to 107 (RNKETLRRPEKLKEESR) the composition is skewed to basic and acidic residues. Residues 124 to 167 (EEQPGVDVLLEVFPTCSMEQAQWVLAKARGNLEEAVQMLIEGKE) enclose the CUE domain.

Belongs to the CUEDC2 family. Interacts with PGR and ESR1.

It localises to the cytoplasm. Its subcellular location is the nucleus. Controls PGR and ESR1 protein levels through their targeting for ubiquitination and subsequent proteasomal degradation. This chain is CUE domain-containing protein 2 (Cuedc2), found in Rattus norvegicus (Rat).